The chain runs to 601 residues: Glutamine--fructose-6-phosphate aminotransferase [isomerizing] (601 aa).

Cys2 acts as the Nucleophile; for GATase activity in catalysis. A Glutamine amidotransferase type-2 domain is found at 2-216; that stretch reads CGIVGYIGTN…DKEIVIVTKD (215 aa). SIS domains follow at residues 282-421 and 453-591; these read IIDE…EIGD and IAGE…VDKP. The For Fru-6P isomerization activity role is filled by Lys596.

As to quaternary structure, homodimer.

It is found in the cytoplasm. The catalysed reaction is D-fructose 6-phosphate + L-glutamine = D-glucosamine 6-phosphate + L-glutamate. In terms of biological role, catalyzes the first step in hexosamine metabolism, converting fructose-6P into glucosamine-6P using glutamine as a nitrogen source. This is Glutamine--fructose-6-phosphate aminotransferase [isomerizing] from Listeria monocytogenes serovar 1/2a (strain ATCC BAA-679 / EGD-e).